A 289-amino-acid polypeptide reads, in one-letter code: Acetyl-coenzyme A carboxylase carboxyl transferase subunit beta (289 aa).

Positions 30 to 289 (IWRECPRCHS…SNAWRANHDK (260 aa)) constitute a CoA carboxyltransferase N-terminal domain. Zn(2+) is bound by residues cysteine 34, cysteine 37, cysteine 52, and cysteine 55. A C4-type zinc finger spans residues 34 to 55 (CPRCHSRFYYRRFGNFDVCPEC).

This sequence belongs to the AccD/PCCB family. Acetyl-CoA carboxylase is a heterohexamer composed of biotin carboxyl carrier protein (AccB), biotin carboxylase (AccC) and two subunits each of ACCase subunit alpha (AccA) and ACCase subunit beta (AccD). The cofactor is Zn(2+).

The protein resides in the cytoplasm. The enzyme catalyses N(6)-carboxybiotinyl-L-lysyl-[protein] + acetyl-CoA = N(6)-biotinyl-L-lysyl-[protein] + malonyl-CoA. Its pathway is lipid metabolism; malonyl-CoA biosynthesis; malonyl-CoA from acetyl-CoA: step 1/1. Component of the acetyl coenzyme A carboxylase (ACC) complex. Biotin carboxylase (BC) catalyzes the carboxylation of biotin on its carrier protein (BCCP) and then the CO(2) group is transferred by the transcarboxylase to acetyl-CoA to form malonyl-CoA. The protein is Acetyl-coenzyme A carboxylase carboxyl transferase subunit beta of Oenococcus oeni (strain ATCC BAA-331 / PSU-1).